Here is a 305-residue protein sequence, read N- to C-terminus: Porphobilinogen deaminase (305 aa).

Cys240 is subject to S-(dipyrrolylmethanemethyl)cysteine.

Belongs to the HMBS family. In terms of assembly, monomer. The cofactor is dipyrromethane.

It catalyses the reaction 4 porphobilinogen + H2O = hydroxymethylbilane + 4 NH4(+). Its pathway is porphyrin-containing compound metabolism; protoporphyrin-IX biosynthesis; coproporphyrinogen-III from 5-aminolevulinate: step 2/4. Its function is as follows. Tetrapolymerization of the monopyrrole PBG into the hydroxymethylbilane pre-uroporphyrinogen in several discrete steps. The chain is Porphobilinogen deaminase (hemC) from Xylella fastidiosa (strain 9a5c).